Here is a 365-residue protein sequence, read N- to C-terminus: Formamidopyrimidine-DNA glycosylase (365 aa).

The active-site Schiff-base intermediate with DNA is the proline 2. The Proton donor role is filled by glutamate 3. The Proton donor; for beta-elimination activity role is filled by lysine 61. A disordered region spans residues 121–150; that stretch reads RGRLAGHGDGMDGTSRTGSTLPGTGGTENS. Positions 134 to 150 are enriched in polar residues; the sequence is TSRTGSTLPGTGGTENS. Residues histidine 186, arginine 205, and arginine 246 each coordinate DNA. The FPG-type zinc finger occupies 331-365; that stretch reads RVYGRGGQPCRHCGTTLATAQVAGRTTVFCPQCQR. The active-site Proton donor; for delta-elimination activity is arginine 355.

This sequence belongs to the FPG family. As to quaternary structure, monomer. Zn(2+) is required as a cofactor.

The enzyme catalyses Hydrolysis of DNA containing ring-opened 7-methylguanine residues, releasing 2,6-diamino-4-hydroxy-5-(N-methyl)formamidopyrimidine.. It catalyses the reaction 2'-deoxyribonucleotide-(2'-deoxyribose 5'-phosphate)-2'-deoxyribonucleotide-DNA = a 3'-end 2'-deoxyribonucleotide-(2,3-dehydro-2,3-deoxyribose 5'-phosphate)-DNA + a 5'-end 5'-phospho-2'-deoxyribonucleoside-DNA + H(+). Functionally, involved in base excision repair of DNA damaged by oxidation or by mutagenic agents. Acts as a DNA glycosylase that recognizes and removes damaged bases. Has a preference for oxidized purines, such as 7,8-dihydro-8-oxoguanine (8-oxoG). Has AP (apurinic/apyrimidinic) lyase activity and introduces nicks in the DNA strand. Cleaves the DNA backbone by beta-delta elimination to generate a single-strand break at the site of the removed base with both 3'- and 5'-phosphates. The polypeptide is Formamidopyrimidine-DNA glycosylase (Nitratidesulfovibrio vulgaris (strain ATCC 29579 / DSM 644 / CCUG 34227 / NCIMB 8303 / VKM B-1760 / Hildenborough) (Desulfovibrio vulgaris)).